A 497-amino-acid chain; its full sequence is Glycerol kinase (497 aa).

Residue Thr12 coordinates ADP. Positions 12, 13, and 14 each coordinate ATP. Thr12 is a sn-glycerol 3-phosphate binding site. Arg16 provides a ligand contact to ADP. Residues Arg82, Glu83, Tyr134, and Asp243 each coordinate sn-glycerol 3-phosphate. The glycerol site is built by Arg82, Glu83, Tyr134, Asp243, and Gln244. The ADP site is built by Thr265 and Gly308. ATP-binding residues include Thr265, Gly308, Gln312, and Gly409. Positions 409 and 413 each coordinate ADP.

The protein belongs to the FGGY kinase family.

The catalysed reaction is glycerol + ATP = sn-glycerol 3-phosphate + ADP + H(+). It participates in polyol metabolism; glycerol degradation via glycerol kinase pathway; sn-glycerol 3-phosphate from glycerol: step 1/1. Inhibited by fructose 1,6-bisphosphate (FBP). Key enzyme in the regulation of glycerol uptake and metabolism. Catalyzes the phosphorylation of glycerol to yield sn-glycerol 3-phosphate. In Nitratidesulfovibrio vulgaris (strain ATCC 29579 / DSM 644 / CCUG 34227 / NCIMB 8303 / VKM B-1760 / Hildenborough) (Desulfovibrio vulgaris), this protein is Glycerol kinase.